The following is a 232-amino-acid chain: Cytidylate kinase (232 aa).

11-19 (GPAGAGKST) serves as a coordination point for ATP.

The protein belongs to the cytidylate kinase family. Type 1 subfamily.

The protein resides in the cytoplasm. The enzyme catalyses CMP + ATP = CDP + ADP. The catalysed reaction is dCMP + ATP = dCDP + ADP. The chain is Cytidylate kinase from Roseiflexus castenholzii (strain DSM 13941 / HLO8).